The primary structure comprises 86 residues: UPF0297 protein LSL_1110 (86 aa).

It belongs to the UPF0297 family.

The sequence is that of UPF0297 protein LSL_1110 from Ligilactobacillus salivarius (strain UCC118) (Lactobacillus salivarius).